The chain runs to 333 residues: Glycerol-3-phosphate dehydrogenase [NAD(P)+] (333 aa).

Positions 10, 11, 31, 32, and 105 each coordinate NADPH. Sn-glycerol 3-phosphate contacts are provided by Lys105, Gly136, and Ser138. Residue Ala140 participates in NADPH binding. Residues Lys191, Asp244, Ser254, Arg255, and Asn256 each coordinate sn-glycerol 3-phosphate. Lys191 serves as the catalytic Proton acceptor. NADPH is bound at residue Arg255. Positions 279 and 281 each coordinate NADPH.

It belongs to the NAD-dependent glycerol-3-phosphate dehydrogenase family.

It is found in the cytoplasm. The enzyme catalyses sn-glycerol 3-phosphate + NAD(+) = dihydroxyacetone phosphate + NADH + H(+). It catalyses the reaction sn-glycerol 3-phosphate + NADP(+) = dihydroxyacetone phosphate + NADPH + H(+). It functions in the pathway membrane lipid metabolism; glycerophospholipid metabolism. Its function is as follows. Catalyzes the reduction of the glycolytic intermediate dihydroxyacetone phosphate (DHAP) to sn-glycerol 3-phosphate (G3P), the key precursor for phospholipid synthesis. This chain is Glycerol-3-phosphate dehydrogenase [NAD(P)+], found in Chlorobium phaeobacteroides (strain DSM 266 / SMG 266 / 2430).